A 184-amino-acid chain; its full sequence is MKIEGSDQLGGEQPQRQPLPPESMAQRQLERLLAKAPESDLFERWQQGAPLEGLLAVVAPAAKRELLWQIYQQGNKPAPEIGKQLFAPVTDKLIARFGERQSPVLDAIDLPELRATMREFDPLASRREKVLLNLLSELRDGQGAVPAEHLFLDALARRELMTLIPLNGMVDNLMRNSHKLDLEA.

A disordered region spans residues 1–25 (MKIEGSDQLGGEQPQRQPLPPESMA).

This sequence belongs to the YopR family.

It is found in the secreted. In terms of biological role, may be involved in the regulation of the assembly of the type III secretion system (T3SS), also called injectisome, which is used to inject bacterial effector proteins into eukaryotic host cells. May control the polymerization of the needle. This is Probable type 3 secretion system regulator AscH from Aeromonas salmonicida subsp. salmonicida.